The primary structure comprises 444 residues: Probable D-serine dehydratase (444 aa).

N6-(pyridoxal phosphate)lysine is present on Lys118.

The protein belongs to the serine/threonine dehydratase family. DsdA subfamily. Requires pyridoxal 5'-phosphate as cofactor.

It catalyses the reaction D-serine = pyruvate + NH4(+). This Desulfitobacterium hafniense (strain Y51) protein is Probable D-serine dehydratase.